The following is a 496-amino-acid chain: Probable cytosol aminopeptidase (496 aa).

Lys251 and Asp256 together coordinate Mn(2+). Lys263 is a catalytic residue. Positions 274, 333, and 335 each coordinate Mn(2+). Residue Arg337 is part of the active site.

The protein belongs to the peptidase M17 family. The cofactor is Mn(2+).

It localises to the cytoplasm. It carries out the reaction Release of an N-terminal amino acid, Xaa-|-Yaa-, in which Xaa is preferably Leu, but may be other amino acids including Pro although not Arg or Lys, and Yaa may be Pro. Amino acid amides and methyl esters are also readily hydrolyzed, but rates on arylamides are exceedingly low.. The catalysed reaction is Release of an N-terminal amino acid, preferentially leucine, but not glutamic or aspartic acids.. Functionally, presumably involved in the processing and regular turnover of intracellular proteins. Catalyzes the removal of unsubstituted N-terminal amino acids from various peptides. The chain is Probable cytosol aminopeptidase from Acidovorax sp. (strain JS42).